We begin with the raw amino-acid sequence, 381 residues long: 1-deoxy-D-xylulose 5-phosphate reductoisomerase (381 aa).

Residues Thr10, Gly11, Ser12, Ile13, and Asn120 each contribute to the NADPH site. Lys121 contacts 1-deoxy-D-xylulose 5-phosphate. Glu122 is an NADPH binding site. Asp146 provides a ligand contact to Mn(2+). 1-deoxy-D-xylulose 5-phosphate is bound by residues Ser147, Glu148, Ser172, and His195. Mn(2+) is bound at residue Glu148. Gly201 contributes to the NADPH binding site. Positions 208, 213, 214, and 217 each coordinate 1-deoxy-D-xylulose 5-phosphate. Glu217 is a binding site for Mn(2+).

The protein belongs to the DXR family. Requires Mg(2+) as cofactor. Mn(2+) serves as cofactor.

The catalysed reaction is 2-C-methyl-D-erythritol 4-phosphate + NADP(+) = 1-deoxy-D-xylulose 5-phosphate + NADPH + H(+). Its pathway is isoprenoid biosynthesis; isopentenyl diphosphate biosynthesis via DXP pathway; isopentenyl diphosphate from 1-deoxy-D-xylulose 5-phosphate: step 1/6. Its function is as follows. Catalyzes the NADPH-dependent rearrangement and reduction of 1-deoxy-D-xylulose-5-phosphate (DXP) to 2-C-methyl-D-erythritol 4-phosphate (MEP). This chain is 1-deoxy-D-xylulose 5-phosphate reductoisomerase, found in Thermodesulfovibrio yellowstonii (strain ATCC 51303 / DSM 11347 / YP87).